The following is a 72-amino-acid chain: Potassium channel toxin epsilon-KTx 1.1 (72 aa).

Residues 1 to 30 (MKLSCGFLLILLVLSAMIATFSEVEAMKPS) form the signal peptide. Intrachain disulfides connect cysteine 34/cysteine 42, cysteine 37/cysteine 58, cysteine 41/cysteine 51, and cysteine 46/cysteine 56. Positions 60–72 (GRSDLNDELEKYQ) are excised as a propeptide.

The protein belongs to the short scorpion toxin superfamily. Potassium channel inhibitor family. Epsilon-KTx 01 subfamily. In terms of tissue distribution, expressed by the venom gland.

The protein resides in the secreted. Its function is as follows. Potassium channel blocker. At 3 uM, this toxin blocks voltage-independently voltage-gated potassium channels rKv1.2/KCNA2 (25%), hKv1.3/KCNA3 (27%), rKv4.2/KCND2 (25%), Kv10.1/KCNH1/EAG1 (15%), Kv11/hERG (12%), and Shaker-IR (10%). On hKv1.3/KCNA3, the IC(50) is 17.1 +-3.3 uM. This chain is Potassium channel toxin epsilon-KTx 1.1, found in Tityus serrulatus (Brazilian scorpion).